A 657-amino-acid polypeptide reads, in one-letter code: uncharacterized protein (657 aa).

Ser114 carries the phosphoserine modification. 5 disordered regions span residues 142 to 216 (LASQ…SDEE), 228 to 248 (SSRE…EEEE), 291 to 312 (STRS…SHTP), 335 to 354 (SSPG…EGAD), and 399 to 522 (AEAS…SGRH). A compositionally biased stretch (polar residues) spans 143 to 169 (ASQNTDKTSQNQARELPVTENNAQNAK). Basic and acidic residues predominate over residues 190-206 (AGKERTLQTPKQKEPAR). Ser213 carries the post-translational modification Phosphoserine. Polar residues-rich tracts occupy residues 234-243 (TNQGFSSANV) and 301-312 (SHVSSDTASHTP). Residues 343–354 (ETVDEPVSEGAD) show a composition bias toward acidic residues. The span at 437 to 451 (SASSASAIQQDSTSS) shows a compositional bias: low complexity. Polar residues predominate over residues 462-484 (NTVSSAYSEDFENSPSLTASEPT). Residues 485–495 (AHSKESLDRTL) show a composition bias toward basic and acidic residues. Residues 499-513 (SESSSSVKTDLPQTA) are compositionally biased toward polar residues.

This is an uncharacterized protein from Homo sapiens (Human).